An 859-amino-acid chain; its full sequence is Probable potassium transporter 14 (859 aa).

Residues 1 to 19 (METRSGGSGSASGGGGGGR) show a composition bias toward gly residues. The tract at residues 1-69 (METRSGGSGS…SRGGCSDSDD (69 aa)) is disordered. Residues 1–112 (METRSGGSGS…RHQEITVGRS (112 aa)) lie on the Cytoplasmic side of the membrane. Over residues 54–65 (PAAASGSRGGCS) the composition is skewed to low complexity. A helical transmembrane segment spans residues 113 to 133 (IVLAVQTLGVVFGDVGTSPLY). The Extracellular segment spans residues 134–155 (AFDVMFNKYPITSKEDVLGALS). Residues 156–176 (LVIYTLILIPLLKYTLIALWG) traverse the membrane as a helical segment. Over 177 to 240 (NDDGEGGTFA…RLETSSMLKK (64 aa)) the chain is Cytoplasmic. Residues 241 to 261 (LLLMLVLFGTSMVIADGVVTP) form a helical membrane-spanning segment. Residues 262–275 (AMSVMSAVNGLKVG) are Extracellular-facing. A helical transmembrane segment spans residues 276–296 (ISSVNEGEVVMITVAVLIVLF). The Cytoplasmic segment spans residues 297 to 305 (TLQRFGSSK). Residues 306-326 (VALAVGPALFIWFCCLAGIGI) traverse the membrane as a helical segment. Over 327-359 (YNMKTYGSAVLQAFNPMYIYYYFERNPTQAWMS) the chain is Extracellular. A helical membrane pass occupies residues 360–380 (LGGCLLCATGSEAMFADLCYF). Residues 381-388 (SVKSVQLT) are Cytoplasmic-facing. The helical transmembrane segment at 389–409 (FVFLVLPCLLLGYLGQAAFLM) threads the bilayer. The Extracellular portion of the chain corresponds to 410–417 (ENLTENQQ). Asn-411 is a glycosylation site (N-linked (GlcNAc...) asparagine). Residues 418 to 438 (VFFLSIPNQAFWPVVFIAILA) traverse the membrane as a helical segment. The Cytoplasmic segment spans residues 439-478 (AIIASRTMTTAIFSTIKQATALGCFPRLKIIHTSRSFMGQ). Residues 479–499 (IYIPMMNWFLLVSCLAFVTMF) traverse the membrane as a helical segment. Residues 500–508 (GSINEIGNA) lie on the Extracellular side of the membrane. A helical membrane pass occupies residues 509–531 (YGIAELGVMMMTTVLVTIIMLLI). Residues 532–535 (WQIN) lie on the Cytoplasmic side of the membrane. The chain crosses the membrane as a helical span at residues 536-558 (IIVVLCFLTLSLGLELIFFSSVL). Residues 559-560 (GS) lie on the Extracellular side of the membrane. A helical transmembrane segment spans residues 561 to 581 (VADGSWVLLVFAAVLYLIMYI). Topologically, residues 582–859 (WNYGTKLKYE…MMQVAMQYMV (278 aa)) are cytoplasmic. A disordered region spans residues 752–772 (GVPPAEAAGTTEHPTIGSSMS). Positions 763–772 (EHPTIGSSMS) are enriched in polar residues.

The protein belongs to the HAK/KUP transporter (TC 2.A.72.3) family.

The protein resides in the membrane. In terms of biological role, high-affinity potassium transporter. In Oryza sativa subsp. japonica (Rice), this protein is Probable potassium transporter 14 (HAK14).